The following is a 128-amino-acid chain: Small ribosomal subunit protein uS9 (128 aa).

The segment at 105-128 (DPRSVERKKPGQPKARRRFQFSKR) is disordered. The span at 114–128 (PGQPKARRRFQFSKR) shows a compositional bias: basic residues.

This sequence belongs to the universal ribosomal protein uS9 family.

In Bacteroides thetaiotaomicron (strain ATCC 29148 / DSM 2079 / JCM 5827 / CCUG 10774 / NCTC 10582 / VPI-5482 / E50), this protein is Small ribosomal subunit protein uS9.